The primary structure comprises 301 residues: Ornithine carbamoyltransferase (301 aa).

Carbamoyl phosphate-binding positions include Arg100 and 127–130 (HPCQ). Residues Asn158, Asp221, and 225–226 (SM) each bind L-ornithine. Positions 260 and 288 each coordinate carbamoyl phosphate.

This sequence belongs to the aspartate/ornithine carbamoyltransferase superfamily. OTCase family. As to quaternary structure, homododecamer.

It localises to the cytoplasm. The enzyme catalyses carbamoyl phosphate + L-ornithine = L-citrulline + phosphate + H(+). The protein operates within amino-acid biosynthesis; L-arginine biosynthesis; L-arginine from L-ornithine and carbamoyl phosphate: step 1/3. Functionally, reversibly catalyzes the transfer of the carbamoyl group from carbamoyl phosphate (CP) to the N(epsilon) atom of ornithine (ORN) to produce L-citrulline. The sequence is that of Ornithine carbamoyltransferase (argF) from Moritella profunda.